The sequence spans 94 residues: Small ubiquitin-related modifier 3 (94 aa).

A Glycyl lysine isopeptide (Lys-Gly) (interchain with G-Cter in SUMO) cross-link involves residue Lys11. The Ubiquitin-like domain occupies 15–92; it reads DHINLKVAGQ…IDVFQQQTGG (78 aa). Gly92 participates in a covalent cross-link: Glycyl lysine isopeptide (Gly-Lys) (interchain with K-? in acceptor proteins). A propeptide spanning residues 93 to 94 is cleaved from the precursor; it reads LC.

Belongs to the ubiquitin family. SUMO subfamily. As to quaternary structure, interacts with SAE2 and UBE2I. Covalently attached to a number of proteins. Polymeric chains can be formed through Lys-11 cross-linking. Post-translationally, cleavage of precursor form by a sentrin-specific protease is necessary for function.

It is found in the cytoplasm. The protein localises to the nucleus. The protein resides in the PML body. Ubiquitin-like protein which can be covalently attached to target lysines either as a monomer or as a lysine-linked polymer. Does not seem to be involved in protein degradation and may function as an antagonist of ubiquitin in the degradation process. Plays a role in a number of cellular processes such as nuclear transport, DNA replication and repair, mitosis and signal transduction. Covalent attachment to its substrates requires prior activation by the E1 complex SAE1-SAE2 and linkage to the E2 enzyme UBE2I. This Gallus gallus (Chicken) protein is Small ubiquitin-related modifier 3.